The primary structure comprises 40 residues: Photosystem II reaction center protein J (40 aa).

A helical membrane pass occupies residues 8 to 28 (IPLWLIGTVTGIAVIGLIGVF).

This sequence belongs to the PsbJ family. As to quaternary structure, PSII is composed of 1 copy each of membrane proteins PsbA, PsbB, PsbC, PsbD, PsbE, PsbF, PsbH, PsbI, PsbJ, PsbK, PsbL, PsbM, PsbT, PsbX, PsbY, PsbZ, Psb30/Ycf12, at least 3 peripheral proteins of the oxygen-evolving complex and a large number of cofactors. It forms dimeric complexes.

Its subcellular location is the plastid. The protein resides in the chloroplast thylakoid membrane. In terms of biological role, one of the components of the core complex of photosystem II (PSII). PSII is a light-driven water:plastoquinone oxidoreductase that uses light energy to abstract electrons from H(2)O, generating O(2) and a proton gradient subsequently used for ATP formation. It consists of a core antenna complex that captures photons, and an electron transfer chain that converts photonic excitation into a charge separation. The chain is Photosystem II reaction center protein J from Oryza nivara (Indian wild rice).